Here is a 380-residue protein sequence, read N- to C-terminus: Acetylornithine deacetylase (380 aa).

Position 79 (H79) interacts with Zn(2+). The active site involves D81. D109 serves as a coordination point for Zn(2+). Residue E139 is part of the active site. Residues E140, E164, and H351 each coordinate Zn(2+).

It belongs to the peptidase M20A family. ArgE subfamily. As to quaternary structure, homodimer. Requires Zn(2+) as cofactor. Co(2+) is required as a cofactor. It depends on glutathione as a cofactor.

Its subcellular location is the cytoplasm. The catalysed reaction is N(2)-acetyl-L-ornithine + H2O = L-ornithine + acetate. Its pathway is amino-acid biosynthesis; L-arginine biosynthesis; L-ornithine from N(2)-acetyl-L-ornithine (linear): step 1/1. Its function is as follows. Catalyzes the hydrolysis of the amide bond of N(2)-acetylated L-amino acids. Cleaves the acetyl group from N-acetyl-L-ornithine to form L-ornithine, an intermediate in L-arginine biosynthesis pathway, and a branchpoint in the synthesis of polyamines. The polypeptide is Acetylornithine deacetylase (Myxococcus xanthus).